The following is a 428-amino-acid chain: Spliceosome RNA helicase DDX39B (428 aa).

Positions 1–19 are enriched in acidic residues; the sequence is MAENDVDNELLDYEEDEVE. The segment at 1–32 is disordered; it reads MAENDVDNELLDYEEDEVETAAGGDGSEAPAK. Ala-2 is subject to N-acetylalanine. The residue at position 36 (Lys-36) is an N6-acetyllysine; alternate. A Glycyl lysine isopeptide (Lys-Gly) (interchain with G-Cter in SUMO2); alternate cross-link involves residue Lys-36. Phosphoserine is present on residues Ser-38 and Ser-41. The Q motif motif lies at 45–73; sequence SGFRDFLLKPELLRAIVDCGFEHPSEVQH. Residues 76 to 249 form the Helicase ATP-binding domain; the sequence is IPQAILGMDV…RKFMQDPMEI (174 aa). An ATP-binding site is contributed by 89-96; it reads AKSGMGKT. Residue Thr-172 is modified to Phosphothreonine. The short motif at 196–199 is the DECD box element; it reads DECD. The Helicase C-terminal domain occupies 261-422; sequence GLQQYYVKLK…ELPDEIDISS (162 aa).

It belongs to the DEAD box helicase family. DECD subfamily. In terms of assembly, homodimer, and heterodimer with DDX39A. DDX39B interacts with the THO subcomplex to form the THO-DDX39B complex which multimerizes into a 28-subunit tetrameric assembly. Component of the transcription/export (TREX) complex at least composed of ALYREF/THOC4, DDX39B, SARNP/CIP29, CHTOP and the THO subcomplex; in the complex interacts with THOC2. THOC1-THOC2-THOC3-DDX39B subcomplex is sufficient for the interaction with export factor NXF1-NXT1. TREX seems to have a dynamic structure involving ATP-dependent remodeling. Within the TREX complex bridges ALYREF/THOC4 and the THO subcomplex, and, in a ATP-dependent manner, ALYREF/THOC4 and SARNP/CIP29. Component of the spliceosome. Interacts directly with U2AF2. Interacts with RBM8A, RNPS1 and SRRM1, FYTTD1/UIF, THOC1, MX1 and POLDIP3. Interacts with LUZP4. Interacts with SARNP/CIP29 (via the C-terminal domain); the interaction is direct and facilitates RNA binding of DDX39B.

The protein localises to the nucleus. The protein resides in the nucleus speckle. It is found in the cytoplasm. The catalysed reaction is ATP + H2O = ADP + phosphate + H(+). Its function is as follows. Involved in nuclear export of spliced and unspliced mRNA. Component of the TREX complex which is thought to couple mRNA transcription, processing and nuclear export, and specifically associates with spliced mRNA and not with unspliced pre-mRNA. The TREX complex is recruited to spliced mRNAs by a transcription-independent mechanism, binds to mRNA upstream of the exon-junction complex (EJC) and is recruited in a splicing- and cap-dependent manner to a region near the 5' end of the mRNA where it functions in mRNA export to the cytoplasm via the TAP/NXF1 pathway. The THOC1-THOC2-THOC3 core complex alone is sufficient to promote ATPase activity of DDX39B; in the complex THOC2 is the only component that directly interacts with DDX39B. Associates with SARNP/CIP29, which facilitates RNA binding of DDX39B and likely plays a role in mRNA export. May undergo several rounds of ATP hydrolysis during assembly of TREX to drive subsequent loading of components such as ALYREF/THOC4 and CHTOP onto mRNA. Also associates with pre-mRNA independent of ALYREF/THOC4. Involved in the nuclear export of intronless mRNA; the ATP-bound form is proposed to recruit export adapter ALYREF/THOC4 to intronless mRNA; its ATPase activity is cooperatively stimulated by RNA and ALYREF/THOC4 and ATP hydrolysis is thought to trigger the dissociation from RNA to allow the association of ALYREF/THOC4 and the NXF1-NXT1 heterodimer. Involved in transcription elongation and genome stability. Splice factor that is required for the first ATP-dependent step in spliceosome assembly and for the interaction of U2 snRNP with the branchpoint. Has both RNA-stimulated ATP binding/hydrolysis activity and ATP-dependent RNA unwinding activity. Even with the stimulation of RNA, the ATPase activity is weak. Can only hydrolyze ATP but not other NTPs. The RNA stimulation of ATPase activity does not have a strong preference for the sequence and length of the RNA. However, ssRNA stimulates the ATPase activity much more strongly than dsRNA. Can unwind 5' or 3' overhangs or blunt end RNA duplexes in vitro. The ATPase and helicase activities are not influenced by U2AF2; the effect of ALYREF/THOC4 is reported conflictingly. In Canis lupus familiaris (Dog), this protein is Spliceosome RNA helicase DDX39B (DDX39B).